A 289-amino-acid polypeptide reads, in one-letter code: Light-independent protochlorophyllide reductase iron-sulfur ATP-binding protein (289 aa).

Residues 10-15 and K39 each bind ATP; that span reads GIGKST. S14 lines the Mg(2+) pocket. The [4Fe-4S] cluster site is built by C95 and C129. 180–181 serves as a coordination point for ATP; sequence NR.

The protein belongs to the NifH/BchL/ChlL family. Homodimer. Protochlorophyllide reductase is composed of three subunits; ChlL, ChlN and ChlB. It depends on [4Fe-4S] cluster as a cofactor.

Its subcellular location is the plastid. It localises to the chloroplast. It carries out the reaction chlorophyllide a + oxidized 2[4Fe-4S]-[ferredoxin] + 2 ADP + 2 phosphate = protochlorophyllide a + reduced 2[4Fe-4S]-[ferredoxin] + 2 ATP + 2 H2O. Its pathway is porphyrin-containing compound metabolism; chlorophyll biosynthesis (light-independent). Its function is as follows. Component of the dark-operative protochlorophyllide reductase (DPOR) that uses Mg-ATP and reduced ferredoxin to reduce ring D of protochlorophyllide (Pchlide) to form chlorophyllide a (Chlide). This reaction is light-independent. The L component serves as a unique electron donor to the NB-component of the complex, and binds Mg-ATP. The polypeptide is Light-independent protochlorophyllide reductase iron-sulfur ATP-binding protein (Tetradesmus obliquus (Green alga)).